Reading from the N-terminus, the 83-residue chain is uncharacterized protein (83 aa).

A disordered region spans residues 58-83; that stretch reads EHGHDDEYDEFSDPNAWVPRRSRDTG.

This is an uncharacterized protein from Mycobacterium tuberculosis (strain CDC 1551 / Oshkosh).